The following is a 336-amino-acid chain: Adenylosuccinate synthetase (336 aa).

GTP contacts are provided by residues 12 to 18 and 42 to 44; these read GDEGKGK and GHS. Asp13 serves as the catalytic Proton acceptor. 2 residues coordinate Mg(2+): Asp13 and Gly42. IMP contacts are provided by residues 13–16, 40–43, Thr127, Arg141, Gln179, Thr194, and Arg256; these read DEGK and NAGH. His43 (proton donor) is an active-site residue. Residue 252-258 coordinates substrate; sequence TVTGRRR. Residues Arg258, 284–286, and 324–326 each bind GTP; these read CLD and STG.

This sequence belongs to the adenylosuccinate synthetase family. Homodimer. Mg(2+) serves as cofactor.

It localises to the cytoplasm. The enzyme catalyses IMP + L-aspartate + GTP = N(6)-(1,2-dicarboxyethyl)-AMP + GDP + phosphate + 2 H(+). It functions in the pathway purine metabolism; AMP biosynthesis via de novo pathway; AMP from IMP: step 1/2. Functionally, plays an important role in the de novo pathway of purine nucleotide biosynthesis. Catalyzes the first committed step in the biosynthesis of AMP from IMP. This is Adenylosuccinate synthetase from Methanococcus aeolicus (strain ATCC BAA-1280 / DSM 17508 / OCM 812 / Nankai-3).